The primary structure comprises 837 residues: PE-PGRS family protein PE_PGRS4 (837 aa).

Residues 4–94 form the PE domain; it reads VIAAPEVIAA…GAYAAAEAAA (91 aa). The span at 811 to 825 shows a compositional bias: gly residues; sequence NGGKAGGTPGAGGTS. Positions 811 to 837 are disordered; the sequence is NGGKAGGTPGAGGTSGLIIGENGLNGL. Residues 826-837 show a composition bias toward low complexity; it reads GLIIGENGLNGL.

It belongs to the mycobacterial PE family. PGRS subfamily.

The chain is PE-PGRS family protein PE_PGRS4 from Mycobacterium tuberculosis (strain ATCC 25618 / H37Rv).